A 339-amino-acid polypeptide reads, in one-letter code: Protein H339R (339 aa).

The protein belongs to the asfivirus H339R family. Interacts with NACA (alpha chain of nascent polypeptide-associated complex).

Its subcellular location is the host cytoplasm. It is found in the host nucleus. It localises to the virion. The protein is Protein H339R of African swine fever virus (strain Badajoz 1971 Vero-adapted) (Ba71V).